Here is a 1017-residue protein sequence, read N- to C-terminus: Protein HIR2 (1017 aa).

7 WD repeats span residues Tyr-10–Lys-49, Cys-74–Pro-117, Ser-124–Leu-163, Cys-167–Ser-208, Pro-228–Glu-271, Gly-275–Val-326, and Ala-330–Ser-371. The tract at residues Ile-417–Ser-561 is disordered. Positions Leu-473–Asp-483 are enriched in acidic residues. 2 stretches are compositionally biased toward polar residues: residues Ser-518 to Lys-535 and Leu-545 to Ser-561.

Belongs to the WD repeat HIR1 family.

It is found in the nucleus. Functionally, required for replication-independent chromatin assembly and for the periodic repression of histone gene transcription during the cell cycle. The sequence is that of Protein HIR2 (HIR2) from Candida albicans (strain SC5314 / ATCC MYA-2876) (Yeast).